Here is a 105-residue protein sequence, read N- to C-terminus: Large ribosomal subunit protein uL24 (105 aa).

This sequence belongs to the universal ribosomal protein uL24 family. In terms of assembly, part of the 50S ribosomal subunit.

Functionally, one of two assembly initiator proteins, it binds directly to the 5'-end of the 23S rRNA, where it nucleates assembly of the 50S subunit. Its function is as follows. One of the proteins that surrounds the polypeptide exit tunnel on the outside of the subunit. The sequence is that of Large ribosomal subunit protein uL24 from Wolbachia pipientis wMel.